The chain runs to 354 residues: UDP-3-O-acylglucosamine N-acyltransferase (354 aa).

His245 functions as the Proton acceptor in the catalytic mechanism.

The protein belongs to the transferase hexapeptide repeat family. LpxD subfamily. In terms of assembly, homotrimer.

The enzyme catalyses a UDP-3-O-[(3R)-3-hydroxyacyl]-alpha-D-glucosamine + a (3R)-hydroxyacyl-[ACP] = a UDP-2-N,3-O-bis[(3R)-3-hydroxyacyl]-alpha-D-glucosamine + holo-[ACP] + H(+). The protein operates within bacterial outer membrane biogenesis; LPS lipid A biosynthesis. Catalyzes the N-acylation of UDP-3-O-acylglucosamine using 3-hydroxyacyl-ACP as the acyl donor. Is involved in the biosynthesis of lipid A, a phosphorylated glycolipid that anchors the lipopolysaccharide to the outer membrane of the cell. The sequence is that of UDP-3-O-acylglucosamine N-acyltransferase from Anaeromyxobacter sp. (strain K).